The chain runs to 374 residues: Cysteine-type anaerobic sulfatase-maturating enzyme (374 aa).

A Radical SAM core domain is found at 1 to 227; that stretch reads MKSLSMLIKP…LNKLFDLWFK (227 aa). [4Fe-4S] cluster contacts are provided by C15 and C19. Y21 serves as a coordination point for S-adenosyl-L-methionine. A [4Fe-4S] cluster-binding site is contributed by C22. Residues G66, S122, R134, and L195 each coordinate S-adenosyl-L-methionine. 3 residues coordinate [4Fe-4S] cluster: C255, C261, and C276. Residue D277 is the Proton acceptor of the active site. [4Fe-4S] cluster is bound by residues C317, C320, C326, C330, and C348.

The protein belongs to the radical SAM superfamily. Anaerobic sulfatase-maturating enzyme family. It depends on [4Fe-4S] cluster as a cofactor.

It catalyses the reaction L-cysteinyl-[sulfatase] + S-adenosyl-L-methionine + H2O = 3-oxo-L-alanyl-[sulfatase] + hydrogen sulfide + 5'-deoxyadenosine + L-methionine + 2 H(+). It participates in protein modification; sulfatase oxidation. Involved in 'Cys-type' sulfatase maturation under anaerobic conditions. Catalyzes the post-translational modification of cysteine into 3-oxoalanine (also known as C(alpha)-formylglycine (FGly)), by a free radical chemical mechanism initiated via the reductive cleavage of S-adenosyl-L-methionine (SAM). In Clostridium novyi (strain NT), this protein is Cysteine-type anaerobic sulfatase-maturating enzyme.